The sequence spans 544 residues: GDP-mannose 4,6-dehydratase sdnI (544 aa).

NADP(+) is bound by residues 16–21, Arg41, 64–65, and 86–90; these read GITGQD, DM, and LAAQS. Ser90 serves as a coordination point for substrate. Active-site nucleophile residues include Glu135 and Tyr157. Tyr157 contacts substrate. Lys161 lines the NADP(+) pocket. Asn186 contacts substrate. Residues His187 and Arg192 each contribute to the NADP(+) site. Substrate contacts are provided by residues 192 to 200, Gly219, Arg225, and 303 to 306; these read RGTTFVTRK and RPVE. The tract at residues 366-406 is disordered; sequence GETTSAVNSSPSSTAGDTYKASDGWSTSGAEGSEQTECSSV. Polar residues-rich tracts occupy residues 368–381 and 389–404; these read TTSA…STAG and GWST…TECS.

This sequence belongs to the NAD(P)-dependent epimerase/dehydratase family. GDP-mannose 4,6-dehydratase subfamily. It depends on NADP(+) as a cofactor.

It carries out the reaction GDP-alpha-D-mannose = GDP-4-dehydro-alpha-D-rhamnose + H2O. Its pathway is antibiotic biosynthesis. Its function is as follows. GDP-mannose 4,6-dehydratase; part of the gene cluster that mediates the biosynthesis of sordarin and hypoxysordarin, glycoside antibiotics with a unique tetracyclic diterpene aglycone structure. First, the geranylgeranyl diphosphate synthase sdnC constructs GGDP from farnesyl diphosphate and isopentenyl diphosphate. The diterpene cyclase sdnA then catalyzes the cyclization of GGDP to afford cycloaraneosene. Cycloaraneosene is then hydroxylated four times by the putative cytochrome P450 monooxygenases sdnB, sdnE, sdnF and sdnH to give a hydroxylated cycloaraneosene derivative such as cycloaraneosene-8,9,13,19-tetraol. Although the order of the hydroxylations is unclear, at least C8, C9 and C13 of the cycloaraneosene skeleton are hydroxylated before the sordaricin formation. Dehydration of the 13-hydroxy group of the hydroxylated cycloaraneosene derivative might be catalyzed by an unassigned hypothetical protein such as sdnG and sdnP to construct the cyclopentadiene moiety. The FAD-dependent oxidoreductase sdnN is proposed to catalyze the oxidation at C9 of the hydroxylated cycloaraneosene derivative and also catalyze the Baeyer-Villiger oxidation to give the lactone intermediate. The presumed lactone intermediate would be hydrolyzed to give an acrolein moiety and a carboxylate moiety. Then, [4+2]cycloaddition would occur between the acrolein moiety and the cyclopentadiene moiety to give sordaricin. SdnN might also be involved in the [4+2]cycloaddition after the hypothesized oxidation to accommodate the oxidized product and prompt the [4+2]cycloaddition. GDP-6-deoxy-D-altrose may be biosynthesized from GDP-D-mannose by the putative GDP-mannose-4,6-dehydratase sdnI and the short-chain dehydrogenase sdnK. The glycosyltransferase sdnJ catalyzes the attachment of 6-deoxy-D-altrose onto the 19-hydroxy group of sordaricin to give 4'-O-demethylsordarin. The methyltransferase sdnD would complete the biosynthesis of sordarin. Sordarin can be further modified into hypoxysordarin. The unique acyl chain at the 3'-hydroxy group of hypoxysordarin would be constructed by an iterative type I PKS sdnO and the trans-acting polyketide methyltransferase sdnL. SdnL would be responsible for the introduction of an alpha-methyl group of the polyketide chain. Alternatively, the beta-lactamase-like protein sdnR might be responsible for the cleavage and transfer of the polyketide chain from the PKS sdnO to sordarin. Two putative cytochrome P450 monooxygenases, sdnQ and sdnT, might catalyze the epoxidations of the polyketide chain to complete the biosynthesis of hypoxysordarin. Transcriptional regulators sdnM and sdnS are presumably encoded for the transcriptional regulation of the expression of the sdn gene cluster. In Sordaria araneosa (Pleurage araneosa), this protein is GDP-mannose 4,6-dehydratase sdnI.